Reading from the N-terminus, the 103-residue chain is Putative membrane protein insertion efficiency factor (103 aa).

This sequence belongs to the UPF0161 family.

It is found in the cell inner membrane. Its function is as follows. Could be involved in insertion of integral membrane proteins into the membrane. The sequence is that of Putative membrane protein insertion efficiency factor from Chlamydia caviae (strain ATCC VR-813 / DSM 19441 / 03DC25 / GPIC) (Chlamydophila caviae).